The sequence spans 71 residues: Prokaryotic ubiquitin-like protein Pup (71 aa).

Residues methionine 1–serine 30 form a disordered region. A coiled-coil region spans residues glutamine 23–threonine 56. Positions glutamine 27–phenylalanine 65 are ARC ATPase binding. An Isoglutamyl lysine isopeptide (Glu-Lys) (interchain with K-? in acceptor proteins) cross-link involves residue glutamate 71.

The protein belongs to the prokaryotic ubiquitin-like protein family. Strongly interacts with the proteasome-associated ATPase ARC through a hydrophobic interface; the interacting region of Pup lies in its C-terminal half. There is one Pup binding site per ARC hexamer ring.

It functions in the pathway protein degradation; proteasomal Pup-dependent pathway. Its function is as follows. Protein modifier that is covalently attached to lysine residues of substrate proteins, thereby targeting them for proteasomal degradation. The tagging system is termed pupylation. This is Prokaryotic ubiquitin-like protein Pup from Bifidobacterium animalis subsp. lactis (strain AD011).